We begin with the raw amino-acid sequence, 155 residues long: Ribosomal RNA large subunit methyltransferase H (155 aa).

S-adenosyl-L-methionine contacts are provided by residues Gly-104 and 123–128; that span reads FGNITL.

It belongs to the RNA methyltransferase RlmH family. In terms of assembly, homodimer.

Its subcellular location is the cytoplasm. The catalysed reaction is pseudouridine(1915) in 23S rRNA + S-adenosyl-L-methionine = N(3)-methylpseudouridine(1915) in 23S rRNA + S-adenosyl-L-homocysteine + H(+). Its function is as follows. Specifically methylates the pseudouridine at position 1915 (m3Psi1915) in 23S rRNA. This Mesoplasma florum (strain ATCC 33453 / NBRC 100688 / NCTC 11704 / L1) (Acholeplasma florum) protein is Ribosomal RNA large subunit methyltransferase H.